The primary structure comprises 61 residues: Small ribosomal subunit protein uS14 (61 aa).

Zn(2+) is bound by residues Cys24, Cys27, Cys40, and Cys43.

It belongs to the universal ribosomal protein uS14 family. Zinc-binding uS14 subfamily. Part of the 30S ribosomal subunit. Contacts proteins S3 and S10. Requires Zn(2+) as cofactor.

Binds 16S rRNA, required for the assembly of 30S particles and may also be responsible for determining the conformation of the 16S rRNA at the A site. The protein is Small ribosomal subunit protein uS14 of Thermus thermophilus (strain ATCC BAA-163 / DSM 7039 / HB27).